The following is a 466-amino-acid chain: MGKTLYQKLFEAHVVHEAPNETPLLYIDRHLVHEVTSPQAFDGLRAMGRKVRQPGKTFATMDHNVSTQTKDINASGEMARIQMQELIKNCAEFGVQLYDLNHPYQGIVHVIGPEQGMTLPGMTIVCGDSHTATHGAFGSLAFGIGTSEVEHVLATQTLKQGRAKTMKIEVTGDAPHGITAKDIVLAIIGKTGSAGGTGHVVEFCGKAIRALSMEGRMTLCNMAIEMGAKAGLVAPDETTFNYLKGRQFAPKDANWDAAVAYWNTLKSDDDAQFDTVVTLDAAQIAPQVTWGTNPGQVIAVNQEIPNPDSFSDPVERASAAKALAYMDLQPGIKLTDVKIDKVFIGSCTNSRIEDLRAAAEIAKGRKVAAGVQAIVVPGSGPVKTMAELEGLDKVFIEAGFEWRLPGCSMCLAMNNDRLNPGERCASTSNRNFEGRQGRAGRTHLVSPAMAAAAAVTGRFADVRELN.

The [4Fe-4S] cluster site is built by Cys347, Cys407, and Cys410.

The protein belongs to the aconitase/IPM isomerase family. LeuC type 1 subfamily. In terms of assembly, heterodimer of LeuC and LeuD. The cofactor is [4Fe-4S] cluster.

It catalyses the reaction (2R,3S)-3-isopropylmalate = (2S)-2-isopropylmalate. It participates in amino-acid biosynthesis; L-leucine biosynthesis; L-leucine from 3-methyl-2-oxobutanoate: step 2/4. In terms of biological role, catalyzes the isomerization between 2-isopropylmalate and 3-isopropylmalate, via the formation of 2-isopropylmaleate. The chain is 3-isopropylmalate dehydratase large subunit from Pectobacterium carotovorum subsp. carotovorum (strain PC1).